A 455-amino-acid chain; its full sequence is Zinc finger protein ZPR1 homolog (455 aa).

2 C4-type zinc fingers span residues 28–60 (CPVC…CPHC) and 247–279 (CPNC…CDRC).

The protein belongs to the ZPR1 family.

It localises to the nucleus. The polypeptide is Zinc finger protein ZPR1 homolog (Caenorhabditis elegans).